The primary structure comprises 208 residues: Small ribosomal subunit protein eS8 (208 aa).

The segment at M1–Y27 is disordered. G2 carries the N-myristoyl glycine lipid modification. A compositionally biased stretch (basic residues) spans W8–K26. 2 positions are modified to N6-acetyllysine: K37 and K128. T130 carries the phosphothreonine modification. The residue at position 160 (S160) is a Phosphoserine. Residues K170 and K193 each participate in a glycyl lysine isopeptide (Lys-Gly) (interchain with G-Cter in SUMO2) cross-link.

The protein belongs to the eukaryotic ribosomal protein eS8 family. Component of the small ribosomal subunit. Identified in a IGF2BP1-dependent mRNP granule complex containing untranslated mRNAs. Part of the small subunit (SSU) processome, composed of more than 70 proteins and the RNA chaperone small nucleolar RNA (snoRNA) U3.

It is found in the cytoplasm. Its subcellular location is the membrane. It localises to the nucleus. The protein localises to the nucleolus. Component of the small ribosomal subunit. The ribosome is a large ribonucleoprotein complex responsible for the synthesis of proteins in the cell. Part of the small subunit (SSU) processome, first precursor of the small eukaryotic ribosomal subunit. During the assembly of the SSU processome in the nucleolus, many ribosome biogenesis factors, an RNA chaperone and ribosomal proteins associate with the nascent pre-rRNA and work in concert to generate RNA folding, modifications, rearrangements and cleavage as well as targeted degradation of pre-ribosomal RNA by the RNA exosome. The sequence is that of Small ribosomal subunit protein eS8 (RPS8) from Oryctolagus cuniculus (Rabbit).